A 321-amino-acid polypeptide reads, in one-letter code: UPF0676 protein C1494.01 (321 aa).

A Fe2OG dioxygenase domain is found at 159-267 (EEDVLRLLKY…RQTIAYFVTP (109 aa)).

Belongs to the UPF0676 family.

Its subcellular location is the cytoplasm. It is found in the nucleus. In Schizosaccharomyces pombe (strain 972 / ATCC 24843) (Fission yeast), this protein is UPF0676 protein C1494.01.